A 459-amino-acid polypeptide reads, in one-letter code: tRNA modification GTPase MnmE (459 aa).

(6S)-5-formyl-5,6,7,8-tetrahydrofolate contacts are provided by arginine 22, glutamate 85, and arginine 124. Residues 221 to 380 (GLSTVIVGKP…LEIQIRDLFF (160 aa)) form the TrmE-type G domain. Asparagine 231 contacts K(+). GTP-binding positions include 231–236 (NVGKSS), 250–256 (TEVAGTT), and 275–278 (DTAG). Residue serine 235 coordinates Mg(2+). Residues threonine 250, valine 252, and threonine 255 each contribute to the K(+) site. Residue threonine 256 participates in Mg(2+) binding. Lysine 459 serves as a coordination point for (6S)-5-formyl-5,6,7,8-tetrahydrofolate.

The protein belongs to the TRAFAC class TrmE-Era-EngA-EngB-Septin-like GTPase superfamily. TrmE GTPase family. As to quaternary structure, homodimer. Heterotetramer of two MnmE and two MnmG subunits. K(+) is required as a cofactor.

It is found in the cytoplasm. Functionally, exhibits a very high intrinsic GTPase hydrolysis rate. Involved in the addition of a carboxymethylaminomethyl (cmnm) group at the wobble position (U34) of certain tRNAs, forming tRNA-cmnm(5)s(2)U34. The polypeptide is tRNA modification GTPase MnmE (Staphylococcus aureus (strain MW2)).